We begin with the raw amino-acid sequence, 377 residues long: Chaperone protein DnaJ (377 aa).

The J domain occupies 5–70; it reads DYYEVLGVGK…EKKAAYDQYG (66 aa). The CR-type zinc finger occupies 137–215; sequence GHEAQIRVPH…CHGQGKLKSQ (79 aa). Cysteine 150, cysteine 153, cysteine 167, cysteine 170, cysteine 189, cysteine 192, cysteine 203, and cysteine 206 together coordinate Zn(2+). CXXCXGXG motif repeat units follow at residues 150–157, 167–174, 189–196, and 203–210; these read CDHCHGNG, CPTCHGAG, CPKCHGSG, and CTKCHGQG.

Belongs to the DnaJ family. In terms of assembly, homodimer. It depends on Zn(2+) as a cofactor.

It is found in the cytoplasm. Functionally, participates actively in the response to hyperosmotic and heat shock by preventing the aggregation of stress-denatured proteins and by disaggregating proteins, also in an autonomous, DnaK-independent fashion. Unfolded proteins bind initially to DnaJ; upon interaction with the DnaJ-bound protein, DnaK hydrolyzes its bound ATP, resulting in the formation of a stable complex. GrpE releases ADP from DnaK; ATP binding to DnaK triggers the release of the substrate protein, thus completing the reaction cycle. Several rounds of ATP-dependent interactions between DnaJ, DnaK and GrpE are required for fully efficient folding. Also involved, together with DnaK and GrpE, in the DNA replication of plasmids through activation of initiation proteins. The protein is Chaperone protein DnaJ of Cupriavidus taiwanensis (strain DSM 17343 / BCRC 17206 / CCUG 44338 / CIP 107171 / LMG 19424 / R1) (Ralstonia taiwanensis (strain LMG 19424)).